A 375-amino-acid polypeptide reads, in one-letter code: Probable cytochrome c oxidase subunit 2 (375 aa).

The next 3 helical transmembrane spans lie at 36-56, 80-100, and 122-142; these read LAVSLGITAMLVSGCSIDNVW, IIAALAMGVLVWGLTFWTVVF, and LTYTAIPFVIIAVLFYFTVVV. Cu cation is bound by residues His264, Cys305, Cys309, and His313. The segment covering 353 to 363 has biased composition (polar residues); it reads VATSTRPFNTD. Residues 353-375 form a disordered region; the sequence is VATSTRPFNTDRTVKSAAAPEAE.

It belongs to the cytochrome c oxidase subunit 2 family. Requires Cu cation as cofactor. Heme serves as cofactor.

It is found in the cell membrane. It catalyses the reaction 4 Fe(II)-[cytochrome c] + O2 + 8 H(+)(in) = 4 Fe(III)-[cytochrome c] + 2 H2O + 4 H(+)(out). In terms of biological role, subunits I and II form the functional core of the enzyme complex. Electrons originating in cytochrome c are transferred via heme a and Cu(A) to the binuclear center formed by heme a3 and Cu(B). This is Probable cytochrome c oxidase subunit 2 (ctaC) from Nocardia farcinica (strain IFM 10152).